The primary structure comprises 478 residues: PRAME family member 27 (478 aa).

Residues 17–40 (RSLLRDQALAMSTLEELPTELFPP) form an LRR 1 repeat. The LRR 1; degenerate repeat unit spans residues 99–126 (RWKLQVLDLQDVCENFWMVWSEAMARGS). The stretch at 181–205 (HLCCKKLKILGMPFRNIRSILKMVN) is one LRR 2; degenerate repeat. The stretch at 206-232 (LDCIQEVEVNCKWVLPILTQFTPYLGH) is one LRR 3; degenerate repeat. An LRR 4; degenerate repeat occupies 233–268 (MRNLQKLVLSHMDVSRYVSPEQKKEIVTQFTTQFLK). LRR repeat units follow at residues 269–294 (LHCL…LSCL), 295–326 (KTSL…SQLK), 327–348 (TLDL…ILLE), 351–378 (AATL…ALSR), and 379–403 (CFEL…LLSH).

This sequence belongs to the PRAME family.

The chain is PRAME family member 27 from Homo sapiens (Human).